Consider the following 193-residue polypeptide: V-type ATP synthase subunit E (193 aa).

Belongs to the V-ATPase E subunit family.

Its function is as follows. Produces ATP from ADP in the presence of a proton gradient across the membrane. The chain is V-type ATP synthase subunit E from Anaeromyxobacter sp. (strain Fw109-5).